The following is a 66-amino-acid chain: Cytoplasmic envelopment protein 3 (66 aa).

G2 carries N-myristoyl glycine; by host lipidation.

This sequence belongs to the herpesviridae cytoplasmic envelopment protein 3 family. As to quaternary structure, interacts with cytoplasmic envelopment protein 2; this interaction is essential for the proper localization of each protein to the assembly complex and thus for the production of infectious virus. In terms of processing, phosphorylated. Phosphorylation does not seem to be required for recycling to the host Golgi apparatus. Packaging is selective for underphosphorylated forms.

The protein resides in the virion tegument. Its subcellular location is the virion membrane. The protein localises to the host cell membrane. It is found in the host Golgi apparatus membrane. In terms of biological role, plays an important role in the cytoplasmic envelopment of tegument proteins and capsids during the assembly and egress processes. Also participates in viral entry at the fusion step probably by regulating the core fusion machinery. This chain is Cytoplasmic envelopment protein 3 (38), found in Saimiriine herpesvirus 2 (strain 11) (SaHV-2).